A 364-amino-acid chain; its full sequence is MTIYNFSAGPATLPKPVLEKAQAELLNYQDSGMSVLEMSHRSPEFDKIIKDAEATLRELMAIPDNYKVIFLQGGASTQFTMVPLNLAQGKKAYYLVGGSWGKKAYTEAVKLSKTIPFEPILLASSEDTVYDHIPSFDPSTIDPEAAYVHLTTNNTIEGTSIYDLPDTNGVPIVAHMSSNILAARYNVEDFALIYAGAQKNIGPAGVTVVIVREDFLNDQPQLSAMLDYRIQAEAGSLYNTPPCFNIYISKLVFDWVKNEIGGVDKMAEIQREKSGLLYDYIESSDFYTNPVKDAKDRSVCNIPFVTPSKDLDAKFVAEADALGFKNIKGHRSVGGMRASVYNAFPRQGVLDLIDFMKKFEDENK.

Arg-41 is an L-glutamate binding site. Pyridoxal 5'-phosphate contacts are provided by residues 75–76 (AS), Trp-100, Thr-155, and Gln-198. An N6-(pyridoxal phosphate)lysine modification is found at Lys-199. Residue 239-240 (NT) participates in pyridoxal 5'-phosphate binding.

Belongs to the class-V pyridoxal-phosphate-dependent aminotransferase family. SerC subfamily. As to quaternary structure, homodimer. It depends on pyridoxal 5'-phosphate as a cofactor.

It localises to the cytoplasm. The catalysed reaction is O-phospho-L-serine + 2-oxoglutarate = 3-phosphooxypyruvate + L-glutamate. It catalyses the reaction 4-(phosphooxy)-L-threonine + 2-oxoglutarate = (R)-3-hydroxy-2-oxo-4-phosphooxybutanoate + L-glutamate. It functions in the pathway amino-acid biosynthesis; L-serine biosynthesis; L-serine from 3-phospho-D-glycerate: step 2/3. Its function is as follows. Catalyzes the reversible conversion of 3-phosphohydroxypyruvate to phosphoserine and of 3-hydroxy-2-oxo-4-phosphonooxybutanoate to phosphohydroxythreonine. The chain is Phosphoserine aminotransferase from Streptococcus thermophilus (strain ATCC BAA-250 / LMG 18311).